Reading from the N-terminus, the 987-residue chain is Mitotic checkpoint serine/threonine-protein kinase bub-1 (987 aa).

Disordered stretches follow at residues 278–385 (RRRH…TSKS) and 574–599 (LAAN…KDSS). The span at 350–364 (ERLKIMTAGRKDGNP) shows a compositional bias: basic and acidic residues. Positions 368–380 (STSISSNYSTASA) are enriched in low complexity. A compositionally biased stretch (polar residues) spans 575-587 (AANQAVQPSVTES). Residues 588–599 (SKPERSDPKDSS) are compositionally biased toward basic and acidic residues. Residues 690–987 (LHIQTLIGQG…EACDLAANQK (298 aa)) enclose the Protein kinase domain. ATP-binding positions include 696–704 (IGQGGYAKV) and lysine 718. Aspartate 814 functions as the Proton acceptor in the catalytic mechanism.

This sequence belongs to the protein kinase superfamily. Ser/Thr protein kinase family. BUB1 subfamily. As to quaternary structure, interacts (via kinase domain) with mdf-1 (via coiled coil domain); the interaction recruits mdf-1 to unattached kinetochores during mitosis and between homologous chromosomes in early anaphase of meiosis I. May interact with bub-3; for localization at the kinetochore and the onset of anaphase.

Its subcellular location is the cytoplasm. It is found in the cell cortex. The protein localises to the nucleus. It localises to the chromosome. The protein resides in the centromere. Its subcellular location is the kinetochore. It carries out the reaction L-seryl-[protein] + ATP = O-phospho-L-seryl-[protein] + ADP + H(+). The enzyme catalyses L-threonyl-[protein] + ATP = O-phospho-L-threonyl-[protein] + ADP + H(+). Its function is as follows. Serine/threonine-protein kinase essential for spindle-assembly checkpoint signaling. Plays a key role in the recruitment of the checkpoint proteins bub-3, mdf-1 and mdf-2 to unattached kinetochores. mdf-1 recruitment is independent of bub-1 kinase activity. Has a role in the correct kinetochore localization of the spindly-like protein spdl-1. In addition, during meiotic anaphase I, controls the recruitment of hcp-1/2 and klp-19 to the ring-shaped domain formed between chromosomes. Involved in chromosome alignment, chromosome homolog segregation and spindle assembly. In association with bub-3 at the kinetochore region of chromosomes, promotes the onset on anaphase independently from spindle checkpoint signaling and promotes the formation of stable end-on bipolar attachments of chromosomes. Plays a role in nuclear envelope breakdown. Required maternally during embryogenesis and in the zygote for the postembryonic development of several tissues including ventral cord neurons, gonad, intestine and seam cells. In Caenorhabditis elegans, this protein is Mitotic checkpoint serine/threonine-protein kinase bub-1.